Consider the following 389-residue polypeptide: Chalcone synthase H2 (389 aa).

C164 is a catalytic residue.

The protein belongs to the thiolase-like superfamily. Chalcone/stilbene synthases family.

It is found in the cytoplasm. It catalyses the reaction (E)-4-coumaroyl-CoA + 3 malonyl-CoA + 3 H(+) = 2',4,4',6'-tetrahydroxychalcone + 3 CO2 + 4 CoA. It functions in the pathway secondary metabolite biosynthesis; flavonoid biosynthesis. In terms of biological role, involved in the biosynthesis of prenylated phenolics natural products which contribute to the bitter taste of beer and display broad biological activities. Chalcone synthase that can use 4-coumaroyl-CoA to produce 4,2',4',6'-tetrahydroxychalcone (also termed naringenin-chalcone or chalcone) which can, under specific conditions, spontaneously isomerize into naringenin. This chain is Chalcone synthase H2, found in Humulus lupulus (European hop).